The following is a 240-amino-acid chain: Probable 2-phosphosulfolactate phosphatase (240 aa).

It belongs to the ComB family. Requires Mg(2+) as cofactor.

It carries out the reaction (2R)-O-phospho-3-sulfolactate + H2O = (2R)-3-sulfolactate + phosphate. The sequence is that of Probable 2-phosphosulfolactate phosphatase from Clostridium kluyveri (strain NBRC 12016).